The following is a 296-amino-acid chain: Phosphatidylglycerol--prolipoprotein diacylglyceryl transferase (296 aa).

3 consecutive transmembrane segments (helical) span residues 17–37 (LAVR…IVVG), 59–79 (MMFY…VLFY), and 97–117 (GGMS…LFAW). An a 1,2-diacyl-sn-glycero-3-phospho-(1'-sn-glycerol)-binding site is contributed by Arg142. Helical transmembrane passes span 230 to 250 (MGAI…TVEF) and 265 to 285 (LSMG…MMIW).

Belongs to the Lgt family.

The protein localises to the cell inner membrane. It carries out the reaction L-cysteinyl-[prolipoprotein] + a 1,2-diacyl-sn-glycero-3-phospho-(1'-sn-glycerol) = an S-1,2-diacyl-sn-glyceryl-L-cysteinyl-[prolipoprotein] + sn-glycerol 1-phosphate + H(+). Its pathway is protein modification; lipoprotein biosynthesis (diacylglyceryl transfer). Functionally, catalyzes the transfer of the diacylglyceryl group from phosphatidylglycerol to the sulfhydryl group of the N-terminal cysteine of a prolipoprotein, the first step in the formation of mature lipoproteins. The protein is Phosphatidylglycerol--prolipoprotein diacylglyceryl transferase of Burkholderia pseudomallei (strain 668).